The chain runs to 40 residues: Dihydrolipoyl dehydrogenase (40 aa).

An FAD-binding site is contributed by 36 to 40; it reads EKRGT.

This sequence belongs to the class-I pyridine nucleotide-disulfide oxidoreductase family. In terms of assembly, homodimer. Requires FAD as cofactor.

It is found in the mitochondrion matrix. It catalyses the reaction N(6)-[(R)-dihydrolipoyl]-L-lysyl-[protein] + NAD(+) = N(6)-[(R)-lipoyl]-L-lysyl-[protein] + NADH + H(+). Functionally, lipoamide dehydrogenase is a component of the glycine cleavage system as well as of the alpha-ketoacid dehydrogenase complexes. The pyruvate dehydrogenase complex contains multiple copies of three enzymatic components: pyruvate dehydrogenase (E1), dihydrolipoamide acetyltransferase (E2) and lipoamide dehydrogenase (E3). The polypeptide is Dihydrolipoyl dehydrogenase (Solanum tuberosum (Potato)).